An 861-amino-acid chain; its full sequence is Interleukin-12 receptor subunit beta-2 (861 aa).

Residues 1–23 (MARTVCGCSWALIFIIMSLLVKA) form the signal peptide. Topologically, residues 24-622 (KIDVCKRGDV…REFCLQGKAN (599 aa)) are extracellular. Residues Asn48, Asn129, Asn166, and Asn271 are each glycosylated (N-linked (GlcNAc...) asparagine). Fibronectin type-III domains are found at residues 126 to 224 (QPQN…VVRP), 226 to 317 (PPWD…TQTP), 318 to 415 (EKEP…NIAD), 423 to 520 (APQQ…KHKA), and 521 to 620 (PLSG…LQGK). A WSXWS motif motif is present at residues 305-309 (WSDWS). 3 N-linked (GlcNAc...) asparagine glycosylation sites follow: Asn347, Asn376, and Asn480. A helical transmembrane segment spans residues 623-643 (WSTFVAPSICIAVITVGVFSM). The Cytoplasmic segment spans residues 644–861 (RCFRQKVFVL…LKMGCGSLML (218 aa)). Residues 662–670 (CSREIPDPA) carry the Box 1 motif motif. A disordered region spans residues 718 to 761 (FRRPHHPNWPGKGQRLQGRHASEEDTGSSASSPPPPRALTAETG). Position 800 is a phosphotyrosine (Tyr800).

It belongs to the type I cytokine receptor family. Type 2 subfamily. In terms of assembly, heterodimer/heterooligomer; disulfide-linked. The functional high affinity IL12 receptor is composed of I12RB1 and IL12RB2. Il12RB2 binds JAK2 (via its N-terminal) through a membrane-proximal region of the cytoplasmic domain. Post-translationally, on IL12 stimulation, phosphorylated on C-terminal tyrosine residues.

It localises to the membrane. Its function is as follows. Receptor for interleukin-12. This subunit is the signaling component coupling to the JAK2/STAT4 pathway. The protein is Interleukin-12 receptor subunit beta-2 (IL12RB2) of Sus scrofa (Pig).